The primary structure comprises 106 residues: MSVVIRLARAGTKKRPFYHVVVADSRFPRDGRFIERLGYFNPLMAKDNEARLKLDLDKVKDWLAKGAQPSDRVARFLDTAGVRKREARNNPEKAVPRKERKAADGK.

Positions 84–106 (KREARNNPEKAVPRKERKAADGK) are disordered.

This is Small ribosomal subunit protein bS16 from Rhodopseudomonas palustris (strain ATCC BAA-98 / CGA009).